Consider the following 302-residue polypeptide: Nucleotide-binding protein SERP0433 (302 aa).

Residue 18–25 (GMSGAGKS) coordinates ATP. 69-72 (DLRG) lines the GTP pocket.

The protein belongs to the RapZ-like family.

Functionally, displays ATPase and GTPase activities. In Staphylococcus epidermidis (strain ATCC 35984 / DSM 28319 / BCRC 17069 / CCUG 31568 / BM 3577 / RP62A), this protein is Nucleotide-binding protein SERP0433.